We begin with the raw amino-acid sequence, 370 residues long: GDSL esterase/lipase At1g09390 (370 aa).

The signal sequence occupies residues 1–27; sequence MATLSLHSHSFLLVLLPFILILRQNLA. The active-site Nucleophile is the Ser-44. N-linked (GlcNAc...) asparagine glycosylation is found at Asn-90 and Asn-315. Active-site residues include Asp-336 and His-339.

It belongs to the 'GDSL' lipolytic enzyme family.

Its subcellular location is the secreted. The polypeptide is GDSL esterase/lipase At1g09390 (Arabidopsis thaliana (Mouse-ear cress)).